A 1275-amino-acid chain; its full sequence is Serine/threonine-protein kinase ULK4 (1275 aa).

Residues 4–280 enclose the Protein kinase domain; it reads FILYEEIGRG…WTRLLQHSFW (277 aa). Disordered stretches follow at residues 299–350 and 364–392; these read SRNT…KSTL and RPTPRTSTAVEVSPGEDMTHCSPQKTSPL. The segment covering 336–348 has biased composition (basic and acidic residues); sequence FRLENPTEFRPKS. Over residues 364–373 the composition is skewed to polar residues; sequence RPTPRTSTAV. HEAT repeat units lie at residues 842–880, 926–964, 1025–1063, 1151–1189, and 1213–1253; these read LKLCLPLMPVVLHLVTSQVFRPQVVTEEFLFSYGTILSH, STVVDYILPPLVSLVQSQNVEWRLFSLRLLSETTSLLVN, LVEESKLIPLIFEVTLEHQESILGNTMQSVIALLSNLVA, NRPLTDLISLLIPLLPNEDPEIFDVSSKCLSILVQLYGG, and PKEQ…LAPG.

It belongs to the protein kinase superfamily. Ser/Thr protein kinase family. APG1/unc-51/ULK1 subfamily. In terms of tissue distribution, expressed in the brain, mainly in postmitotic neurons, including GABAergic neurons, but not in astrocytes (at protein level).

It carries out the reaction L-seryl-[protein] + ATP = O-phospho-L-seryl-[protein] + ADP + H(+). The enzyme catalyses L-threonyl-[protein] + ATP = O-phospho-L-threonyl-[protein] + ADP + H(+). Its function is as follows. May be involved in the remodeling of cytoskeletal components, such as alpha-tubulin, and in this way regulates neurite branching and elongation, as well as cell motility. This is Serine/threonine-protein kinase ULK4 (ULK4) from Homo sapiens (Human).